The following is a 365-amino-acid chain: Cobalt-precorrin-5B C(1)-methyltransferase (365 aa).

Belongs to the CbiD family.

The catalysed reaction is Co-precorrin-5B + S-adenosyl-L-methionine = Co-precorrin-6A + S-adenosyl-L-homocysteine. The protein operates within cofactor biosynthesis; adenosylcobalamin biosynthesis; cob(II)yrinate a,c-diamide from sirohydrochlorin (anaerobic route): step 6/10. Catalyzes the methylation of C-1 in cobalt-precorrin-5B to form cobalt-precorrin-6A. This Paraburkholderia phytofirmans (strain DSM 17436 / LMG 22146 / PsJN) (Burkholderia phytofirmans) protein is Cobalt-precorrin-5B C(1)-methyltransferase.